The chain runs to 264 residues: Somatomedin-B and thrombospondin type-1 domain-containing protein (264 aa).

A signal peptide spans 1–20 (MRTLWMALCALSRLWPGAQA). One can recognise an SMB domain in the interval 24–75 (EAGRCCPGRDPACFARGWRLDRVYGTCFCDQACRFTGDCCFDYDRACPARPC). Cystine bridges form between cysteine 28-cysteine 36, cysteine 28-cysteine 52, cysteine 36-cysteine 70, cysteine 50-cysteine 52, cysteine 50-cysteine 63, cysteine 56-cysteine 62, and cysteine 63-cysteine 70. A TSP type-1 domain is found at 74-127 (PCFVGEWSPWSGCADQCKPTTRVRRRSVQQEPQNGGAPCPPLEERAGCLEYSTP). The N-linked (GlcNAc...) asparagine glycan is linked to asparagine 227.

It belongs to the thrombospondin family. In terms of tissue distribution, detected in aorta extracellular matrix (at protein level).

It is found in the secreted. It localises to the extracellular space. The protein resides in the extracellular matrix. The sequence is that of Somatomedin-B and thrombospondin type-1 domain-containing protein (SBSPON) from Homo sapiens (Human).